The sequence spans 185 residues: MLKIRLARGGAKKRPYYSIVVADSHSPRDGRFIEKVGTYNPLLKKDDAARVTLKVESIQAWLAKGAQPTDRVARFLAAQGLVQWTHGNNPEKAKPGKKAQERDAERTQRDADRVAAEAQAKEDAKAAAAEAAEAAAAAAAEAAAAPAPEPEVVAEEAPVEAAAEEAPAAEAAAEEAPASEETTEG.

The segment at 83 to 185 is disordered; that stretch reads QWTHGNNPEK…APASEETTEG (103 aa). Basic and acidic residues predominate over residues 89–125; sequence NPEKAKPGKKAQERDAERTQRDADRVAAEAQAKEDAK. Low complexity-rich tracts occupy residues 126 to 146 and 159 to 176; these read AAAAEAAEAAAAAAAEAAAAP and VEAAAEEAPAAEAAAEEA.

The protein belongs to the bacterial ribosomal protein bS16 family.

This chain is Small ribosomal subunit protein bS16, found in Caulobacter sp. (strain K31).